Here is a 206-residue protein sequence, read N- to C-terminus: CASP-like protein 1F1 (206 aa).

Residues 1–43 (MCFQFSILYTCYLAHFGVFPRKYLVMAGIEAKFQQNPPLGTHK) lie on the Cytoplasmic side of the membrane. Residues 44–64 (LFLGAHICLRILTVTATLTAA) form a helical membrane-spanning segment. The Extracellular segment spans residues 65-92 (WMMITSKQTVEVYGIQVEAKYSYSSAFK). The chain crosses the membrane as a helical span at residues 93–113 (FFSYANAIACGCSVLTLFPAF). Residues 114–124 (SLFYRGSTPMK) are Cytoplasmic-facing. Residues 125-145 (FFFLFLHDLCMMSLVLAGCAA) traverse the membrane as a helical segment. Over 146 to 177 (ATAIGYVGRYGNNHAGWMAICDQFDEYCNRIR) the chain is Extracellular. A helical membrane pass occupies residues 178–198 (LSLMFSYLAFVFILMLTIMSA). Topologically, residues 199 to 206 (NKSREIRV) are cytoplasmic.

This sequence belongs to the Casparian strip membrane proteins (CASP) family. As to quaternary structure, homodimer and heterodimers.

It is found in the cell membrane. In Vitis vinifera (Grape), this protein is CASP-like protein 1F1.